The sequence spans 495 residues: Flagellin (495 aa).

The protein belongs to the bacterial flagellin family.

The protein localises to the secreted. It localises to the bacterial flagellum. Its function is as follows. Flagellin is the subunit protein which polymerizes to form the filaments of bacterial flagella. The protein is Flagellin (fliC) of Salmonella paratyphi A (strain ATCC 9150 / SARB42).